The following is a 425-amino-acid chain: MNSASTHKNTDFWIFGLFFFLYFFIMATCFPFLPVWLSDVVGLSKTDTGIVFSCLSLFAISFQPLLGVISDRLGLKKNLIWSISLLLVFFAPFFLYVFAPLLHLNIWAGALTGGVFIGFVFSAGAGAIEAYIERVSRSSGFEYGKARMFGCLGWALCATMAGILFNVDPSLVFWMGSGGALLLLLLLYLARPSTSQTAMVMNALGANSSLISTRMVFSLFRMRQMWMFVLYTIGVACVYDVFDQQFAIFFRSFFDTPQAGIKAFGFATTAGEICNAIIMFCTPWIINRIGAKNTLLVAGGIMTIRITGSAFATTMTEVVILKMLHALEVPFLLVGAFKYITGVFDTRLSATVYLIGFQFSKQLAAILLSTFAGHLYDRMGFQNTYFVLGMIVLTVTVISAFTLSSSPGIVHPSVEKAPVAHSEIN.

Over 1 to 11 (MNSASTHKNTD) the chain is Cytoplasmic. The chain crosses the membrane as a helical span at residues 12 to 32 (FWIFGLFFFLYFFIMATCFPF). Residues 33–48 (LPVWLSDVVGLSKTDT) lie on the Periplasmic side of the membrane. Residues 49–69 (GIVFSCLSLFAISFQPLLGVI) form a helical membrane-spanning segment. Residues 70–78 (SDRLGLKKN) are Cytoplasmic-facing. Residues 79–99 (LIWSISLLLVFFAPFFLYVFA) form a helical membrane-spanning segment. Residues 100-105 (PLLHLN) are Periplasmic-facing. A helical transmembrane segment spans residues 106–126 (IWAGALTGGVFIGFVFSAGAG). The Cytoplasmic portion of the chain corresponds to 127–147 (AIEAYIERVSRSSGFEYGKAR). A helical membrane pass occupies residues 148–168 (MFGCLGWALCATMAGILFNVD). P169 is a topological domain (periplasmic). The helical transmembrane segment at 170–190 (SLVFWMGSGGALLLLLLLYLA) threads the bilayer. The Cytoplasmic segment spans residues 191–229 (RPSTSQTAMVMNALGANSSLISTRMVFSLFRMRQMWMFV). The chain crosses the membrane as a helical span at residues 230–250 (LYTIGVACVYDVFDQQFAIFF). Over 251-265 (RSFFDTPQAGIKAFG) the chain is Periplasmic. Residues 266 to 286 (FATTAGEICNAIIMFCTPWII) form a helical membrane-spanning segment. Residues 287 to 294 (NRIGAKNT) are Cytoplasmic-facing. A helical transmembrane segment spans residues 295–315 (LLVAGGIMTIRITGSAFATTM). A topological domain (periplasmic) is located at residue T316. A helical membrane pass occupies residues 317–337 (EVVILKMLHALEVPFLLVGAF). Residues 338–351 (KYITGVFDTRLSAT) are Cytoplasmic-facing. The chain crosses the membrane as a helical span at residues 352-372 (VYLIGFQFSKQLAAILLSTFA). Residues 373–383 (GHLYDRMGFQN) lie on the Periplasmic side of the membrane. A helical membrane pass occupies residues 384–404 (TYFVLGMIVLTVTVISAFTLS). The Cytoplasmic segment spans residues 405 to 425 (SSPGIVHPSVEKAPVAHSEIN).

This sequence belongs to the major facilitator superfamily. Oligosaccharide:H(+) symporter (OHS) (TC 2.A.1.5) family. Monomer.

The protein localises to the cell inner membrane. Its function is as follows. Responsible for transport of raffinose into the cell. Can also transport lactose and melibiose. Has weak activity with maltose. The polypeptide is Raffinose permease (Escherichia coli).